The following is a 263-amino-acid chain: N-acetylgalactosamine permease IID component (263 aa).

Positions 3–263 (SEISKKDITR…SIVCSAFGIL (261 aa)) constitute a PTS EIID domain. The next 6 helical transmembrane spans lie at 61–81 (LEFINTHPNLVGFLMGLLISM), 98–118 (LFGPIAGIGDAIFWFTLLPIM), 131–151 (LLGPILFFAVYLLIFFLRVGW), 178–198 (TILGITVIGGLIASYVHINVV), 215–235 (FFDKVFPNILPMAYTLLMYYF), and 243–263 (PVLLIGVTFVLSIVCSAFGIL).

It is found in the cell inner membrane. The phosphoenolpyruvate-dependent sugar phosphotransferase system (PTS), a major carbohydrate active -transport system, catalyzes the phosphorylation of incoming sugar substrates concomitant with their translocation across the cell membrane. This system is involved in N-acetylgalactosamine transport. This chain is N-acetylgalactosamine permease IID component (agaD), found in Escherichia coli (strain K12).